Consider the following 1816-residue polypeptide: MGWSTAWCSVLALWLLWCAVCSNAASGDGNAFPFDIEGSAVVGRQDPSETSDSGVTLGRLPPAAERCDAGFFRTLSGECAPCDCNGNSHECLDGSGFCLHCQRNTTGEHCEKCLDGYIGDSIRGTPRFCQPCPCPLPHLANFAESCYRKNGAVRCICKENYVGPNCERCAPGYYGNPLLIGSTCKKCDCSGNSDPNLIFEDCDEITGQCRNCLRNTTGFKCERCAPGYYGDARTAKNCAVCNCGGGPCDSVTGECLEEGFEVPTGCDKCVWDLTDDLRLAALSIEESKSGLLSVSSGAAAHRHVTDMNSTIHLLRTRLSERENQYTLRKIQINNSENTLRSLLPDVEGLHEKGSQASRKGMLVEKESMDTIDQATHLVEQAHNMRDKIQEINSKMLYYGENQELGPEEIAEKLVLAQKMLEEIRSRQPFLTHRELVDEEADEAQELLSQAENWQRLHNDTRSLFPVVLEQLDDYNAKLSDLQESINQALDHVRDAEDMNRAITFKQRDHEKQHERVKEQMEVVGASLSMSADSLTIPQLTLEELDEIIKNASGIYAEIDGAKNELQGKLSNLSNLSHDLVQEATDHAYNLQQEADELSRNLHSSDMNGLVQKALDASNVYENIANYVSEANETAELALNITDRIYDAVSGIDTQIIYHKDESDNLLNQARELQAKADSSNDEAVADTSRRVGGALWRKGALRDRLNDAVKQLQAAERGDAHQRLGQSKLFIEEANKTTAAVQQVTTPMANNLSNWSQNLQTFDSSAYNTAVDSARDAVRNLTEVVPQLLDQLRTVEQKRPASNISASIQRIRELIAQTRSVASKIQVSMMFDGQSAVEVHPKVSVDDLKAFTSISLYMKPPPKPAEPTGAWVADQFVLYLGSKNAKKEYMGLAIKNDNLVYVYNLGMKDVEILLDSKPVSSWPAYFSIVKIERVGKHGKVFLTVPSLSSTAEEKFIKKGEFAGDDSLLDLTPEDTVFYVGGVPANFKLPASLNLPSYSGCLELATLNNDVISLYNFKHIYNMDPSKSVPCARDKLAFTQSRAASYFFDGSSYAVVRDITRRGKFGQVTRFDIEIRTPADNGLVLLMVNGSMFFSLEMRNGYLHVFYDFGFSNGPVHLEDTLKKAQINDAKYHEISIIYHNDKKMILVVDRRHVKSTDNEKKKIPFTDIYIGGAPQEVLQSRTLRAHLPLDINFRGCMKGFQFQKKDFNLLEQTETLGVGYGCPEDSLISRRAYFNGQSFIASIQKISFFDGFEGGFNFRTLQPNGLLFYYTSGSDVFSISLDNGTVVMDVKGIKVMSTDKQYHDGLPHFVVTSISDTRYELVVDKSRLRGKNPTKGKAEQTQTTEKKFYFGGSPISPQYANFTGCISNAYFTRLDRDVEVEDFQRYSEKVHTSLYECPIESSPLFLLHKKGKNSSKPKTNKQGEKSKDAPSWDPIGLKFLEQKAPRDSHCHLSSSPRAIEHAYQYGGTANSRQEFEHEQGDFGEKSQFAIRLKTRSSHGMIFYVSDQEENDFMTLFLAHGRLVFMFNVGHKKLKIRSQEKYNDGLWHDVIFIREKSSGRLVIDGLRVLEERLPPSGAAWKIKGPIYLGGVAPGRAVKNVQITSVYSFSGCLGNLQLNGASITSASQTFSVTPCFEGPMETGTYFSTEGGYVVLDESFNIGLKFEIAFEVRPRSSSGTLVHGHSVNGEYLNVHMRNGQVIVKVNNGVRDFSTSVTPKQNLCDGRWHRITVIRDSNVVQLDVDSEVNHVVGPLNPKPVDHREPVFVGGVPESLLTPRLAPSKPFTGCIRHFVIDSRPVSFSKAALVSGAVSINSCPTA.

The first 24 residues, 1 to 24 (MGWSTAWCSVLALWLLWCAVCSNA), serve as a signal peptide directing secretion. The O-linked (Xyl...) (chondroitin sulfate) serine glycan is linked to serine 39. 12 disulfide bridges follow: cysteine 82/cysteine 91, cysteine 84/cysteine 98, cysteine 101/cysteine 110, cysteine 113/cysteine 129, cysteine 132/cysteine 146, cysteine 134/cysteine 155, cysteine 157/cysteine 166, cysteine 169/cysteine 184, cysteine 187/cysteine 202, cysteine 189/cysteine 209, cysteine 212/cysteine 221, and cysteine 224/cysteine 238. Laminin EGF-like domains lie at 82–131 (CDCN…FCQP), 132–186 (CPCP…TCKK), and 187–240 (CDCS…NCAV). Asparagine 104 is a glycosylation site (N-linked (GlcNAc...) asparagine). The N-linked (GlcNAc...) asparagine glycan is linked to asparagine 215. The Laminin EGF-like 4; truncated domain occupies 241-255 (CNCGGGPCDSVTGEC). The segment at 256–825 (LEEGFEVPTG…AQTRSVASKI (570 aa)) is domain II and I. 8 N-linked (GlcNAc...) asparagine glycosylation sites follow: asparagine 308, asparagine 333, asparagine 458, asparagine 550, asparagine 571, asparagine 574, asparagine 631, and asparagine 639. Positions 431–523 (THRELVDEEA…ERVKEQMEVV (93 aa)) form a coiled coil. A coiled-coil region spans residues 556–604 (AEIDGAKNELQGKLSNLSNLSHDLVQEATDHAYNLQQEADELSRNLHSS). Residues 655-717 (IIYHKDESDN…AVKQLQAAER (63 aa)) adopt a coiled-coil conformation. The Cell attachment site motif lies at 717-719 (RGD). Residues asparagine 735, asparagine 751, asparagine 754, asparagine 780, and asparagine 803 are each glycosylated (N-linked (GlcNAc...) asparagine). Residues 770–799 (AVDSARDAVRNLTEVVPQLLDQLRTVEQKR) are a coiled coil. Laminin G-like domains are found at residues 826 to 1030 (QVSM…SVPC), 1042 to 1222 (AASY…GYGC), and 1229 to 1397 (SRRA…LYEC). Cysteine 1000 and cysteine 1030 are disulfide-bonded. Asparagine 1088 carries N-linked (GlcNAc...) asparagine glycosylation. Cysteines 1196 and 1222 form a disulfide. Residues asparagine 1283 and asparagine 1361 are each glycosylated (N-linked (GlcNAc...) asparagine). Cysteine 1365 and cysteine 1397 are disulfide-bonded. Residues 1409-1419 (KKGKNSSKPKT) are compositionally biased toward basic residues. Residues 1409–1433 (KKGKNSSKPKTNKQGEKSKDAPSWD) form a disordered region. Residues 1421 to 1430 (KQGEKSKDAP) show a composition bias toward basic and acidic residues. 2 Laminin G-like domains span residues 1462-1633 (AYQY…VTPC) and 1640-1813 (TGTY…INSC). Cystine bridges form between cysteine 1610-cysteine 1633 and cysteine 1785-cysteine 1813.

In terms of assembly, laminin is a complex glycoprotein, consisting of three different polypeptide chains (alpha, beta, gamma), which are bound to each other by disulfide bonds into a cross-shaped molecule comprising one long and three short arms with globules at each end. Alpha-4 is a subunit of laminin-8 (laminin-411), laminin-9 (laminin-421) and laminin-14 (laminin-423). As to expression, strongly expressed in peripheral nerves, cardiac muscle, fat, dermis, lung stroma, aortic endothelium, endocardium and endothelium of blood vessels in skin and brain.

It is found in the secreted. The protein resides in the extracellular space. It localises to the extracellular matrix. The protein localises to the basement membrane. In terms of biological role, binding to cells via a high affinity receptor, laminin is thought to mediate the attachment, migration and organization of cells into tissues during embryonic development by interacting with other extracellular matrix components. The chain is Laminin subunit alpha-4 (Lama4) from Mus musculus (Mouse).